We begin with the raw amino-acid sequence, 412 residues long: Argininosuccinate synthase (412 aa).

ATP contacts are provided by residues Ala10–Ser18 and Ala36. Positions 87 and 92 each coordinate L-citrulline. A Phosphotyrosine modification is found at Tyr87. Lys112 is subject to N6-acetyllysine. At Tyr113 the chain carries Phosphotyrosine. Ser115–Asn123 lines the ATP pocket. Residues Thr119, Asn123, and Asp124 each contribute to the L-aspartate site. Asn123 is a binding site for L-citrulline. An L-citrulline-binding site is contributed by Arg127. Residues Lys165 and Lys176 each carry the N6-acetyllysine; by CLOCK modification. Ser177 and Ser180 each carry phosphoserine. Residues Ser180 and Ser189 each contribute to the L-citrulline site. The residue at position 219 (Thr219) is a Phosphothreonine. The L-citrulline site is built by Glu270 and Tyr282.

This sequence belongs to the argininosuccinate synthase family. Type 1 subfamily. As to quaternary structure, homotetramer. Interacts with NMRAL1. Interacts with CLOCK; in a circadian manner. Forms tissue-specific complexes with ASL, SLC7A1, HSP90AA1 and nitric oxide synthase NOS1, NOS2 or NOS3; the complex regulates cell-autonomous L-arginine synthesis and citrulline recycling while channeling extracellular L-arginine to nitric oxide synthesis pathway. In terms of processing, acetylated by CLOCK in a circadian manner which negatively regulates its enzyme activity. Deacetylated by histone deacetylases.

It localises to the cytoplasm. It is found in the cytosol. It carries out the reaction L-citrulline + L-aspartate + ATP = 2-(N(omega)-L-arginino)succinate + AMP + diphosphate + H(+). Its pathway is amino-acid biosynthesis; L-arginine biosynthesis; L-arginine from L-ornithine and carbamoyl phosphate: step 2/3. It functions in the pathway nitrogen metabolism; urea cycle; (N(omega)-L-arginino)succinate from L-aspartate and L-citrulline: step 1/1. Its function is as follows. One of the enzymes of the urea cycle, the metabolic pathway transforming neurotoxic amonia produced by protein catabolism into inocuous urea in the liver of ureotelic animals. Catalyzes the formation of arginosuccinate from aspartate, citrulline and ATP and together with ASL it is responsible for the biosynthesis of arginine in most body tissues. Indirectly, may be involved in the control of blood pressure. This is Argininosuccinate synthase from Rattus norvegicus (Rat).